The following is a 544-amino-acid chain: CTP synthase (544 aa).

Positions Met1 to Leu265 are amidoligase domain. Position 13 (Ser13) interacts with CTP. Ser13 serves as a coordination point for UTP. Residues Ser14 to Ile19 and Asp71 contribute to the ATP site. Residues Asp71 and Glu139 each contribute to the Mg(2+) site. CTP is bound by residues Asp146 to Glu148, Lys186 to Gln191, and Lys222. Residues Lys186–Gln191 and Lys222 contribute to the UTP site. Residues Lys290–Ala544 form the Glutamine amidotransferase type-1 domain. Gly353 lines the L-glutamine pocket. Residue Cys380 is the Nucleophile; for glutamine hydrolysis of the active site. L-glutamine contacts are provided by residues Leu381–Gln384, Glu404, and Arg471. Active-site residues include His517 and Glu519.

This sequence belongs to the CTP synthase family. In terms of assembly, homotetramer.

It catalyses the reaction UTP + L-glutamine + ATP + H2O = CTP + L-glutamate + ADP + phosphate + 2 H(+). The enzyme catalyses L-glutamine + H2O = L-glutamate + NH4(+). It carries out the reaction UTP + NH4(+) + ATP = CTP + ADP + phosphate + 2 H(+). Its pathway is pyrimidine metabolism; CTP biosynthesis via de novo pathway; CTP from UDP: step 2/2. Allosterically activated by GTP, when glutamine is the substrate; GTP has no effect on the reaction when ammonia is the substrate. The allosteric effector GTP functions by stabilizing the protein conformation that binds the tetrahedral intermediate(s) formed during glutamine hydrolysis. Inhibited by the product CTP, via allosteric rather than competitive inhibition. Catalyzes the ATP-dependent amination of UTP to CTP with either L-glutamine or ammonia as the source of nitrogen. Regulates intracellular CTP levels through interactions with the four ribonucleotide triphosphates. In Neisseria meningitidis serogroup C / serotype 2a (strain ATCC 700532 / DSM 15464 / FAM18), this protein is CTP synthase.